The primary structure comprises 393 residues: 4-hydroxyphenylpyruvate dioxygenase (393 aa).

2 VOC domains span residues 17 to 148 (AFDH…LLER) and 179 to 339 (FLDH…IFSK). The Fe cation site is built by histidine 182, histidine 267, and glutamate 350.

It belongs to the 4HPPD family. Fe cation serves as cofactor.

It carries out the reaction 3-(4-hydroxyphenyl)pyruvate + O2 = homogentisate + CO2. The protein operates within amino-acid degradation; L-phenylalanine degradation; acetoacetate and fumarate from L-phenylalanine: step 3/6. Key enzyme in the degradation of tyrosine. In Caenorhabditis briggsae, this protein is 4-hydroxyphenylpyruvate dioxygenase (hpd-1).